The sequence spans 512 residues: Cytochrome P450 1A2 (512 aa).

Ser-65 carries O-linked (GlcNAc) serine glycosylation. Position 222 (Phe-222) interacts with substrate. Residue Cys-454 coordinates heme.

This sequence belongs to the cytochrome P450 family. As to quaternary structure, interacts with PGRMC1; the interaction requires PGRMC1 homodimerization. The cofactor is heme. In terms of tissue distribution, constitutively expressed in liver.

The protein localises to the endoplasmic reticulum membrane. The protein resides in the microsome membrane. It carries out the reaction an organic molecule + reduced [NADPH--hemoprotein reductase] + O2 = an alcohol + oxidized [NADPH--hemoprotein reductase] + H2O + H(+). It catalyses the reaction 17beta-estradiol + reduced [NADPH--hemoprotein reductase] + O2 = 2-hydroxy-17beta-estradiol + oxidized [NADPH--hemoprotein reductase] + H2O + H(+). The enzyme catalyses 17beta-estradiol + reduced [NADPH--hemoprotein reductase] + O2 = 4-hydroxy-17beta-estradiol + oxidized [NADPH--hemoprotein reductase] + H2O + H(+). The catalysed reaction is estrone + reduced [NADPH--hemoprotein reductase] + O2 = 2-hydroxyestrone + oxidized [NADPH--hemoprotein reductase] + H2O + H(+). It carries out the reaction estrone + reduced [NADPH--hemoprotein reductase] + O2 = 4-hydroxyestrone + oxidized [NADPH--hemoprotein reductase] + H2O + H(+). It catalyses the reaction cholesterol + reduced [NADPH--hemoprotein reductase] + O2 = 25-hydroxycholesterol + oxidized [NADPH--hemoprotein reductase] + H2O + H(+). The enzyme catalyses all-trans-retinol + reduced [NADPH--hemoprotein reductase] + O2 = all-trans-retinal + oxidized [NADPH--hemoprotein reductase] + 2 H2O + H(+). The catalysed reaction is all-trans-retinal + reduced [NADPH--hemoprotein reductase] + O2 = all-trans-retinoate + oxidized [NADPH--hemoprotein reductase] + H2O + 2 H(+). It carries out the reaction (5Z,8Z,11Z,14Z)-eicosatetraenoate + reduced [NADPH--hemoprotein reductase] + O2 = (14R,15S)-epoxy-(5Z,8Z,11Z)-eicosatrienoate + oxidized [NADPH--hemoprotein reductase] + H2O + H(+). It catalyses the reaction (5Z,8Z,11Z,14Z)-eicosatetraenoate + reduced [NADPH--hemoprotein reductase] + O2 = (14S,15R)-epoxy-(5Z,8Z,11Z)-eicosatrienoate + oxidized [NADPH--hemoprotein reductase] + H2O + H(+). The enzyme catalyses (5Z,8Z,11Z,14Z,17Z)-eicosapentaenoate + reduced [NADPH--hemoprotein reductase] + O2 = (17R,18S)-epoxy-(5Z,8Z,11Z,14Z)-eicosatetraenoate + oxidized [NADPH--hemoprotein reductase] + H2O + H(+). The catalysed reaction is (4Z,7Z,10Z,13Z,16Z,19Z)-docosahexaenoate + reduced [NADPH--hemoprotein reductase] + O2 = (19R,20S)-epoxy-(4Z,7Z,10Z,13Z,16Z)-docosapentaenoate + oxidized [NADPH--hemoprotein reductase] + H2O + H(+). It carries out the reaction (5S)-hydroperoxy-(6E,8Z,11Z,14Z)-eicosatetraenoate = 5-oxo-(6E,8Z,11Z,14Z)-eicosatetraenoate + H2O. It catalyses the reaction (12S)-hydroperoxy-(5Z,8Z,10E,14Z)-eicosatetraenoate = 12-oxo-(5Z,8Z,10E,14Z)-eicosatetraenoate + H2O. The enzyme catalyses (15S)-hydroperoxy-(5Z,8Z,11Z,13E)-eicosatetraenoate = 15-oxo-(5Z,8Z,11Z,13E)-eicosatetraenoate + H2O. The catalysed reaction is (13S)-hydroperoxy-(9Z,11E)-octadecadienoate = 13-oxo-(9Z,11E)-octadecadienoate + H2O. It carries out the reaction (5Z,8Z,11Z,14Z)-eicosatetraenoate + reduced [NADPH--hemoprotein reductase] + O2 = 13-hydroxy-(5Z,8Z,11Z,14Z)-eicosatetraenoate + oxidized [NADPH--hemoprotein reductase] + H2O + H(+). It catalyses the reaction (5Z,8Z,11Z,14Z)-eicosatetraenoate + reduced [NADPH--hemoprotein reductase] + O2 = 19-hydroxy-(5Z,8Z,11Z,14Z)-eicosatetraenoate + oxidized [NADPH--hemoprotein reductase] + H2O + H(+). The enzyme catalyses (9Z,12Z)-octadecadienoate + reduced [NADPH--hemoprotein reductase] + O2 = 11-hydroxy-(9Z,12Z)-octadecadienoate + oxidized [NADPH--hemoprotein reductase] + H2O + H(+). It functions in the pathway cofactor metabolism; retinol metabolism. Its pathway is steroid metabolism; cholesterol metabolism. It participates in lipid metabolism; arachidonate metabolism. In terms of biological role, a cytochrome P450 monooxygenase involved in the metabolism of various endogenous substrates, including fatty acids, steroid hormones and vitamins. Mechanistically, uses molecular oxygen inserting one oxygen atom into a substrate, and reducing the second into a water molecule, with two electrons provided by NADPH via cytochrome P450 reductase (NADPH--hemoprotein reductase). Catalyzes the hydroxylation of carbon-hydrogen bonds. Exhibits high catalytic activity for the formation of hydroxyestrogens from estrone (E1) and 17beta-estradiol (E2), namely 2-hydroxy E1 and E2. Metabolizes cholesterol toward 25-hydroxycholesterol, a physiological regulator of cellular cholesterol homeostasis. May act as a major enzyme for all-trans retinoic acid biosynthesis in the liver. Catalyzes two successive oxidative transformation of all-trans retinol to all-trans retinal and then to the active form all-trans retinoic acid. Primarily catalyzes stereoselective epoxidation of the last double bond of polyunsaturated fatty acids (PUFA), displaying a strong preference for the (R,S) stereoisomer. Catalyzes bisallylic hydroxylation and omega-1 hydroxylation of PUFA. May also participate in eicosanoids metabolism by converting hydroperoxide species into oxo metabolites (lipoxygenase-like reaction, NADPH-independent). Plays a role in the oxidative metabolism of xenobiotics. Catalyzes the N-hydroxylation of heterocyclic amines and the O-deethylation of phenacetin. Metabolizes caffeine via N3-demethylation. The chain is Cytochrome P450 1A2 (CYP1A2) from Canis lupus familiaris (Dog).